Reading from the N-terminus, the 323-residue chain is Breast cancer metastasis-suppressor 1-like protein (323 aa).

Basic and acidic residues predominate over residues 1 to 15 (MPVHSREKKENNHDE). A disordered region spans residues 1-56 (MPVHSREKKENNHDEMEVDYGENEGSTSEEEETESSSVSEEGDSSEMDDEDCERRR). Positions 16-51 (MEVDYGENEGSTSEEEETESSSVSEEGDSSEMDDED) are enriched in acidic residues. 2 coiled-coil regions span residues 50–82 (EDCE…KERL) and 147–178 (EKLL…ITSE).

This sequence belongs to the BRMS1 family.

The protein localises to the nucleus. In terms of biological role, involved in the histone deacetylase (HDAC1)-dependent transcriptional repression activity. This chain is Breast cancer metastasis-suppressor 1-like protein (BRMS1L), found in Gallus gallus (Chicken).